A 405-amino-acid polypeptide reads, in one-letter code: MEYTEVMVRYGELSTKGKNRKDFINRLASNVEKVLKDLPQIDFHPRHDRMHIVLNGAPFAEVDKRLKKVFGIQTYSPAIKIPKTLEDIEKTSLELMQETFKPGMTFKVNTKRSDHKFEYDTNQLNNLVGDYLFDHIDHLKAEMKHPDLVLRIEVRQDAVYISNQLLHGIGGMPVGTAGKAVMMLSGGIDSPVASYLAMKRGVDIEMVHFFSPPYTTEKALAKAKELTGILANYVGKINFIAVPFAEIQETIKEKLPEGYLMTVQRRFMLQLADRIRAKRGGLAIFNGESVGQVASQTLQSMVAINDVTTTPVIRPVATMDKTEIIKLAEDIGTFDLSIQPFEDCCTIFAPPRPKTKPKLDKAREYEARLDVEGLIQRAMDGIEVMPIYPNEKFINDKIEEDQDLL.

One can recognise a THUMP domain in the interval 60–165; sequence AEVDKRLKKV…QDAVYISNQL (106 aa). ATP contacts are provided by residues 183 to 184, 208 to 209, Arg265, Gly287, and Gln296; these read ML and HF.

The protein belongs to the ThiI family.

The protein localises to the cytoplasm. The catalysed reaction is [ThiI sulfur-carrier protein]-S-sulfanyl-L-cysteine + a uridine in tRNA + 2 reduced [2Fe-2S]-[ferredoxin] + ATP + H(+) = [ThiI sulfur-carrier protein]-L-cysteine + a 4-thiouridine in tRNA + 2 oxidized [2Fe-2S]-[ferredoxin] + AMP + diphosphate. The enzyme catalyses [ThiS sulfur-carrier protein]-C-terminal Gly-Gly-AMP + S-sulfanyl-L-cysteinyl-[cysteine desulfurase] + AH2 = [ThiS sulfur-carrier protein]-C-terminal-Gly-aminoethanethioate + L-cysteinyl-[cysteine desulfurase] + A + AMP + 2 H(+). It functions in the pathway cofactor biosynthesis; thiamine diphosphate biosynthesis. Functionally, catalyzes the ATP-dependent transfer of a sulfur to tRNA to produce 4-thiouridine in position 8 of tRNAs, which functions as a near-UV photosensor. Also catalyzes the transfer of sulfur to the sulfur carrier protein ThiS, forming ThiS-thiocarboxylate. This is a step in the synthesis of thiazole, in the thiamine biosynthesis pathway. The sulfur is donated as persulfide by IscS. The chain is Probable tRNA sulfurtransferase from Lactobacillus helveticus (strain DPC 4571).